The primary structure comprises 158 residues: Small ribosomal subunit protein uS9 (158 aa).

The protein belongs to the universal ribosomal protein uS9 family.

This Rhodopseudomonas palustris (strain HaA2) protein is Small ribosomal subunit protein uS9.